The primary structure comprises 562 residues: Arginine--tRNA ligase (562 aa).

The 'HIGH' region motif lies at 122–132 (PNIAKDMHVGH).

This sequence belongs to the class-I aminoacyl-tRNA synthetase family. In terms of assembly, monomer.

Its subcellular location is the cytoplasm. It carries out the reaction tRNA(Arg) + L-arginine + ATP = L-arginyl-tRNA(Arg) + AMP + diphosphate. The protein is Arginine--tRNA ligase of Chlamydia abortus (strain DSM 27085 / S26/3) (Chlamydophila abortus).